Consider the following 99-residue polypeptide: Nucleoid-associated protein SSA_0326 (99 aa).

Positions 1–15 (MMNMQSMMKQAQKLQ) are enriched in low complexity. Positions 1-23 (MMNMQSMMKQAQKLQKQMEKGQA) are disordered.

It belongs to the YbaB/EbfC family. Homodimer.

It localises to the cytoplasm. It is found in the nucleoid. In terms of biological role, binds to DNA and alters its conformation. May be involved in regulation of gene expression, nucleoid organization and DNA protection. The protein is Nucleoid-associated protein SSA_0326 of Streptococcus sanguinis (strain SK36).